The sequence spans 89 residues: Small ribosomal subunit protein bS16 (89 aa).

This sequence belongs to the bacterial ribosomal protein bS16 family.

This is Small ribosomal subunit protein bS16 from Geobacillus stearothermophilus (Bacillus stearothermophilus).